The following is a 353-amino-acid chain: Melatonin receptor type 1A (353 aa).

Residues 1-32 are Extracellular-facing; sequence MKGNVSELLNATQQAPGGGEGGRPRPSWLAST. Asparagine 4 and asparagine 10 each carry an N-linked (GlcNAc...) asparagine glycan. Residues 33–53 form a helical membrane-spanning segment; sequence LAFILIFTIVVDILGNLLVIL. The Cytoplasmic portion of the chain corresponds to 54-66; that stretch reads SVYRNKKLRNSGN. Residues 67 to 87 form a helical membrane-spanning segment; that stretch reads IFVVSLAVADLVVAVYPYPLV. At 88-105 the chain is on the extracellular side; the sequence is LTSILNNGWNLGYLHCQV. An intrachain disulfide couples cysteine 103 to cysteine 180. Residues 106–126 form a helical membrane-spanning segment; it reads SAFLMGLSVIGSIFNITGIAM. Topologically, residues 127 to 145 are cytoplasmic; sequence NRYCYICHSLKYDKIYSNK. The helical transmembrane segment at 146–166 threads the bilayer; that stretch reads NSLCYVFLIWMLTLIAIMPNL. Over 167 to 190 the chain is Extracellular; it reads QTGTLQYDPRIYSCTFTQSVSSAY. Residues 191 to 211 traverse the membrane as a helical segment; the sequence is TIAVVVFHFIVPMIIVIFCYL. At 212–243 the chain is on the cytoplasmic side; that stretch reads RIWVLVLQVRRRVKPDNKPKLKPQDFRNFVTM. Residues 244-264 form a helical membrane-spanning segment; it reads FVVFVLFAICWAPLNLIGLIV. Residues 265–277 are Extracellular-facing; that stretch reads ASDPATMVPRIPE. The helical transmembrane segment at 278–298 threads the bilayer; sequence WLFVASYYLAYFNSCLNAIIY. The Cytoplasmic portion of the chain corresponds to 299-353; it reads GLLNQNFRKEYKKIIVSLCTAKMFFVESSNEEADKIKCKPSPLIPNNNLIKVDSV.

Belongs to the G-protein coupled receptor 1 family.

The protein localises to the cell membrane. In terms of biological role, high affinity receptor for melatonin. Likely to mediate the reproductive and circadian actions of melatonin. The activity of this receptor is mediated by pertussis toxin sensitive G proteins that inhibit adenylate cyclase activity. Possibly involved in sleep induction, by melatonin activation of the potassium channel KCNMA1/BK and the dissociation of G-beta and G-gamma subunits, thereby decreasing synaptic transmission. In Mus musculus (Mouse), this protein is Melatonin receptor type 1A (Mtnr1a).